Consider the following 428-residue polypeptide: Cytochrome c biogenesis protein CcsB (428 aa).

3 helical membrane-spanning segments follow: residues 14 to 34, 72 to 92, and 162 to 182; these read LRFA…GTFI, SIWF…CSFR, and IGPL…AYGS.

The protein belongs to the Ccs1/CcsB family. May interact with CcsA.

The protein resides in the cellular thylakoid membrane. Its function is as follows. Required during biogenesis of c-type cytochromes (cytochrome c6 and cytochrome f) at the step of heme attachment. The chain is Cytochrome c biogenesis protein CcsB from Prochlorococcus marinus (strain MIT 9312).